We begin with the raw amino-acid sequence, 121 residues long: Flagellar protein FliT (121 aa).

Residues 1–50 (MNNAPHLYFAWQQLVEKSQLMLRLATEEQWDELIASEMAYVNAVQEIAHL) are required for homodimerization. The fliD binding stretch occupies residues 60-98 (MQEQLRPMLRLILDNESKVKQLLQIRMDELAKLVGQSSV).

It belongs to the FliT family. As to quaternary structure, homodimer. Interacts with FliD and FlhC.

The protein resides in the cytoplasm. Its subcellular location is the cytosol. Its function is as follows. Dual-function protein that regulates the transcription of class 2 flagellar operons and that also acts as an export chaperone for the filament-capping protein FliD. As a transcriptional regulator, acts as an anti-FlhDC factor; it directly binds FlhC, thus inhibiting the binding of the FlhC/FlhD complex to class 2 promoters, resulting in decreased expression of class 2 flagellar operons. As a chaperone, effects FliD transition to the membrane by preventing its premature polymerization, and by directing it to the export apparatus. The chain is Flagellar protein FliT from Escherichia coli O9:H4 (strain HS).